A 132-amino-acid chain; its full sequence is Phosphoribosyl-AMP cyclohydrolase (132 aa).

Residue Asp86 coordinates Mg(2+). Zn(2+) is bound at residue Cys87. The Mg(2+) site is built by Asp88 and Asp90. 2 residues coordinate Zn(2+): Cys103 and Cys110.

It belongs to the PRA-CH family. As to quaternary structure, homodimer. The cofactor is Mg(2+). Zn(2+) is required as a cofactor.

The protein resides in the cytoplasm. The enzyme catalyses 1-(5-phospho-beta-D-ribosyl)-5'-AMP + H2O = 1-(5-phospho-beta-D-ribosyl)-5-[(5-phospho-beta-D-ribosylamino)methylideneamino]imidazole-4-carboxamide. It participates in amino-acid biosynthesis; L-histidine biosynthesis; L-histidine from 5-phospho-alpha-D-ribose 1-diphosphate: step 3/9. In terms of biological role, catalyzes the hydrolysis of the adenine ring of phosphoribosyl-AMP. The sequence is that of Phosphoribosyl-AMP cyclohydrolase from Haloquadratum walsbyi (strain DSM 16790 / HBSQ001).